Consider the following 551-residue polypeptide: Palmdelphin (551 aa).

Met-1 carries the post-translational modification N-acetylmethionine. Residues 12–106 are a coiled coil; sequence QAITDKRKIQ…LQISANEEAI (95 aa). Lys-125 participates in a covalent cross-link: Glycyl lysine isopeptide (Lys-Gly) (interchain with G-Cter in SUMO2). A Phosphoserine modification is found at Ser-135. Lys-178 participates in a covalent cross-link: Glycyl lysine isopeptide (Lys-Gly) (interchain with G-Cter in SUMO1); alternate. Lys-178 participates in a covalent cross-link: Glycyl lysine isopeptide (Lys-Gly) (interchain with G-Cter in SUMO2); alternate. Residues 247-258 are compositionally biased toward basic and acidic residues; it reads ERNSKSPTEYHE. The interval 247 to 266 is disordered; the sequence is ERNSKSPTEYHEPVYANPFC. Thr-270 carries the phosphothreonine modification. 2 disordered regions span residues 294–390 and 451–533; these read LGNH…TCQE and AEDN…GTED. Phosphoserine occurs at positions 321 and 349. Polar residues predominate over residues 341-353; it reads HTQQKRMASPWEE. Basic and acidic residues predominate over residues 354–365; it reads SSNRQNEHEVSP. A phosphoserine mark is found at Ser-370, Ser-375, Ser-384, Ser-385, Ser-498, Ser-515, and Ser-520.

Belongs to the paralemmin family. In terms of assembly, interacts with GLUL. Post-translationally, phosphorylated. As to expression, ubiquitous. Expressed at highest levels in the heart and lung.

It is found in the cytoplasm. Its subcellular location is the cell projection. It localises to the dendrite. The protein localises to the dendritic spine. The polypeptide is Palmdelphin (Palmd) (Mus musculus (Mouse)).